The sequence spans 360 residues: Photosystem II protein D1 3 (360 aa).

A run of 3 helical transmembrane segments spans residues 29-46, 118-133, and 142-156; these read YVGW…TAAI, HFLI…QWEL, and WIPV…AATA. Histidine 118 contributes to the chlorophyll a binding site. Tyrosine 126 provides a ligand contact to pheophytin a. Positions 170 and 189 each coordinate [CaMn4O5] cluster. The helical transmembrane segment at 197–218 threads the bilayer; sequence FHMIGVAGVFGGALFSAMHGSL. Histidine 198 lines the chlorophyll a pocket. A quinone-binding positions include histidine 215 and 264–265; that span reads SF. Residue histidine 215 participates in Fe cation binding. A Fe cation-binding site is contributed by histidine 272. A helical membrane pass occupies residues 274–288; sequence FLAAWPVIGIWFAAL. [CaMn4O5] cluster-binding residues include histidine 332, glutamate 333, aspartate 342, and alanine 344. Residues 345 to 360 constitute a propeptide that is removed on maturation; it reads SGEVQPIALTAPAIAS.

This sequence belongs to the reaction center PufL/M/PsbA/D family. As to quaternary structure, PSII is composed of 1 copy each of membrane proteins PsbA, PsbB, PsbC, PsbD, PsbE, PsbF, PsbH, PsbI, PsbJ, PsbK, PsbL, PsbM, PsbT, PsbX, PsbY, PsbZ, Psb30/Ycf12, peripheral proteins PsbO, CyanoQ (PsbQ), PsbU, PsbV and a large number of cofactors. It forms dimeric complexes. The D1/D2 heterodimer binds P680, chlorophylls that are the primary electron donor of PSII, and subsequent electron acceptors. It shares a non-heme iron and each subunit binds pheophytin, quinone, additional chlorophylls, carotenoids and lipids. D1 provides most of the ligands for the Mn4-Ca-O5 cluster of the oxygen-evolving complex (OEC). There is also a Cl(-1) ion associated with D1 and D2, which is required for oxygen evolution. The PSII complex binds additional chlorophylls, carotenoids and specific lipids. is required as a cofactor. Post-translationally, tyr-161 forms a radical intermediate that is referred to as redox-active TyrZ, YZ or Y-Z. C-terminally processed by CtpA; processing is essential to allow assembly of the oxygen-evolving complex and thus photosynthetic growth.

The protein localises to the cellular thylakoid membrane. It catalyses the reaction 2 a plastoquinone + 4 hnu + 2 H2O = 2 a plastoquinol + O2. In terms of biological role, photosystem II (PSII) is a light-driven water:plastoquinone oxidoreductase that uses light energy to abstract electrons from H(2)O, generating O(2) and a proton gradient subsequently used for ATP formation. It consists of a core antenna complex that captures photons, and an electron transfer chain that converts photonic excitation into a charge separation. The D1/D2 (PsbA/PsbD) reaction center heterodimer binds P680, the primary electron donor of PSII as well as several subsequent electron acceptors. This Nostoc sp. (strain PCC 7120 / SAG 25.82 / UTEX 2576) protein is Photosystem II protein D1 3.